We begin with the raw amino-acid sequence, 682 residues long: Potassium-transporting ATPase ATP-binding subunit (682 aa).

The next 4 membrane-spanning stretches (helical) occupy residues 34-54 (PVMF…LAMV), 58-78 (IAGS…TVLF), 219-239 (IALT…TATL), and 254-274 (VLVA…LSAI). The active-site 4-aspartylphosphate intermediate is Asp307. ATP is bound by residues Asp344, Glu348, 377–384 (FTAQSRMS), and Lys395. Residues Asp518 and Asp522 each contribute to the Mg(2+) site. 3 consecutive transmembrane segments (helical) span residues 588 to 608 (FAII…LNVM), 616 to 636 (AILS…PLAL), and 662 to 682 (LVVP…LGLA).

It belongs to the cation transport ATPase (P-type) (TC 3.A.3) family. Type IA subfamily. In terms of assembly, the system is composed of three essential subunits: KdpA, KdpB and KdpC.

The protein localises to the cell inner membrane. It catalyses the reaction K(+)(out) + ATP + H2O = K(+)(in) + ADP + phosphate + H(+). Its function is as follows. Part of the high-affinity ATP-driven potassium transport (or Kdp) system, which catalyzes the hydrolysis of ATP coupled with the electrogenic transport of potassium into the cytoplasm. This subunit is responsible for energy coupling to the transport system and for the release of the potassium ions to the cytoplasm. The sequence is that of Potassium-transporting ATPase ATP-binding subunit from Salmonella paratyphi A (strain ATCC 9150 / SARB42).